Consider the following 564-residue polypeptide: Probable metalloprotease ARX1 (564 aa).

It belongs to the peptidase M24 family. As to quaternary structure, component of the nucleoplasmic and cytoplasmic pre-60S ribosomal particles.

The protein resides in the cytoplasm. It is found in the nucleus. In terms of biological role, probable metalloprotease involved in proper assembly of pre-ribosomal particles during the biogenesis of the 60S ribosomal subunit. Accompanies the pre-60S particles to the cytoplasm. In Candida albicans (strain SC5314 / ATCC MYA-2876) (Yeast), this protein is Probable metalloprotease ARX1 (ARX1).